A 358-amino-acid chain; its full sequence is SPbeta prophage-derived probable integrase/recombinase YopP (358 aa).

In terms of domain architecture, Core-binding (CB) spans 23–114 (NKDIRSSSGN…SLKMLYTYLE (92 aa)). The 183-residue stretch at 137–319 (KNWDKTTQTE…NIANSAGVTM (183 aa)) folds into the Tyr recombinase domain. Active-site residues include Arg178, Lys206, His268, and His295. The active-site O-(3'-phospho-DNA)-tyrosine intermediate is Tyr304.

Belongs to the 'phage' integrase family.

Functionally, probable recombinase that does not seem to have a role in chromosome dimer resolution per se but rather may have some facilitative role during chromosome partitioning in general. In Bacillus subtilis (strain 168), this protein is SPbeta prophage-derived probable integrase/recombinase YopP (yopP).